Consider the following 397-residue polypeptide: Elongation factor Tu (397 aa).

Residues 10 to 207 (KPHCNIGTIG…AVDEWIPQPE (198 aa)) enclose the tr-type G domain. Positions 19-26 (GHVDHGKT) are G1. 19-26 (GHVDHGKT) provides a ligand contact to GTP. Threonine 26 serves as a coordination point for Mg(2+). The G2 stretch occupies residues 61–65 (GITIS). Residues 82–85 (DCPG) are G3. Residues 82–86 (DCPGH) and 137–140 (NKVD) each bind GTP. The interval 137–140 (NKVD) is G4. The segment at 175–177 (SAL) is G5.

It belongs to the TRAFAC class translation factor GTPase superfamily. Classic translation factor GTPase family. EF-Tu/EF-1A subfamily. In terms of assembly, monomer.

The protein resides in the cytoplasm. The catalysed reaction is GTP + H2O = GDP + phosphate + H(+). GTP hydrolase that promotes the GTP-dependent binding of aminoacyl-tRNA to the A-site of ribosomes during protein biosynthesis. The chain is Elongation factor Tu from Sphingopyxis alaskensis (strain DSM 13593 / LMG 18877 / RB2256) (Sphingomonas alaskensis).